Here is a 70-residue protein sequence, read N- to C-terminus: Large ribosomal subunit protein uL29 (70 aa).

The protein belongs to the universal ribosomal protein uL29 family.

The polypeptide is Large ribosomal subunit protein uL29 (Thermosynechococcus vestitus (strain NIES-2133 / IAM M-273 / BP-1)).